A 161-amino-acid chain; its full sequence is Putative pre-16S rRNA nuclease (161 aa).

It belongs to the YqgF nuclease family.

Its subcellular location is the cytoplasm. Its function is as follows. Could be a nuclease involved in processing of the 5'-end of pre-16S rRNA. In Methylocella silvestris (strain DSM 15510 / CIP 108128 / LMG 27833 / NCIMB 13906 / BL2), this protein is Putative pre-16S rRNA nuclease.